A 173-amino-acid chain; its full sequence is Methylated-DNA--protein-cysteine methyltransferase (173 aa).

Cysteine 143 acts as the Nucleophile; methyl group acceptor in catalysis.

It belongs to the MGMT family.

Its subcellular location is the cytoplasm. The enzyme catalyses a 6-O-methyl-2'-deoxyguanosine in DNA + L-cysteinyl-[protein] = S-methyl-L-cysteinyl-[protein] + a 2'-deoxyguanosine in DNA. It catalyses the reaction a 4-O-methyl-thymidine in DNA + L-cysteinyl-[protein] = a thymidine in DNA + S-methyl-L-cysteinyl-[protein]. Involved in the cellular defense against the biological effects of O6-methylguanine (O6-MeG) and O4-methylthymine (O4-MeT) in DNA. Repairs the methylated nucleobase in DNA by stoichiometrically transferring the methyl group to a cysteine residue in the enzyme. This is a suicide reaction: the enzyme is irreversibly inactivated. The protein is Methylated-DNA--protein-cysteine methyltransferase of Pyrococcus sp. (strain NA2).